The chain runs to 147 residues: Nucleoside diphosphate kinase (147 aa).

Positions 9, 57, 85, 91, 102, and 112 each coordinate ATP. The active-site Pros-phosphohistidine intermediate is histidine 115.

Belongs to the NDK family. In terms of assembly, homotetramer. Mg(2+) serves as cofactor.

It localises to the cytoplasm. The enzyme catalyses a 2'-deoxyribonucleoside 5'-diphosphate + ATP = a 2'-deoxyribonucleoside 5'-triphosphate + ADP. It catalyses the reaction a ribonucleoside 5'-diphosphate + ATP = a ribonucleoside 5'-triphosphate + ADP. Functionally, major role in the synthesis of nucleoside triphosphates other than ATP. The ATP gamma phosphate is transferred to the NDP beta phosphate via a ping-pong mechanism, using a phosphorylated active-site intermediate. This is Nucleoside diphosphate kinase from Fervidobacterium nodosum (strain ATCC 35602 / DSM 5306 / Rt17-B1).